The following is a 349-amino-acid chain: NADH-ubiquinone oxidoreductase chain 2 (349 aa).

9 consecutive transmembrane segments (helical) span residues 3-23 (PYVL…TFAS), 66-86 (AAAM…EWEI), 98-118 (VMLA…LPEV), 139-159 (FALM…TIGL), 178-198 (ILAY…QFAP), 199-219 (SLTL…FLTL), 240-260 (LAAL…LSGF), 274-294 (GLPL…YFYL), and 319-339 (FTMI…LLPL).

Belongs to the complex I subunit 2 family.

The protein resides in the mitochondrion inner membrane. The catalysed reaction is a ubiquinone + NADH + 5 H(+)(in) = a ubiquinol + NAD(+) + 4 H(+)(out). Core subunit of the mitochondrial membrane respiratory chain NADH dehydrogenase (Complex I) that is believed to belong to the minimal assembly required for catalysis. Complex I functions in the transfer of electrons from NADH to the respiratory chain. The immediate electron acceptor for the enzyme is believed to be ubiquinone. The protein is NADH-ubiquinone oxidoreductase chain 2 (MT-ND2) of Oncorhynchus mykiss (Rainbow trout).